The chain runs to 396 residues: NADH-quinone oxidoreductase subunit D 1 (396 aa).

The protein belongs to the complex I 49 kDa subunit family. In terms of assembly, NDH-1 is composed of 14 different subunits. Subunits NuoB, C, D, E, F, and G constitute the peripheral sector of the complex.

The protein resides in the cell inner membrane. It catalyses the reaction a quinone + NADH + 5 H(+)(in) = a quinol + NAD(+) + 4 H(+)(out). In terms of biological role, NDH-1 shuttles electrons from NADH, via FMN and iron-sulfur (Fe-S) centers, to quinones in the respiratory chain. The immediate electron acceptor for the enzyme in this species is believed to be ubiquinone. Couples the redox reaction to proton translocation (for every two electrons transferred, four hydrogen ions are translocated across the cytoplasmic membrane), and thus conserves the redox energy in a proton gradient. The protein is NADH-quinone oxidoreductase subunit D 1 of Rhizobium meliloti (strain 1021) (Ensifer meliloti).